The primary structure comprises 302 residues: Sulfate adenylyltransferase subunit 2 (302 aa).

This sequence belongs to the PAPS reductase family. CysD subfamily. In terms of assembly, heterodimer composed of CysD, the smaller subunit, and CysN.

It catalyses the reaction sulfate + ATP + H(+) = adenosine 5'-phosphosulfate + diphosphate. It participates in sulfur metabolism; hydrogen sulfide biosynthesis; sulfite from sulfate: step 1/3. In terms of biological role, with CysN forms the ATP sulfurylase (ATPS) that catalyzes the adenylation of sulfate producing adenosine 5'-phosphosulfate (APS) and diphosphate, the first enzymatic step in sulfur assimilation pathway. APS synthesis involves the formation of a high-energy phosphoric-sulfuric acid anhydride bond driven by GTP hydrolysis by CysN coupled to ATP hydrolysis by CysD. The sequence is that of Sulfate adenylyltransferase subunit 2 from Xanthomonas euvesicatoria pv. vesicatoria (strain 85-10) (Xanthomonas campestris pv. vesicatoria).